A 506-amino-acid chain; its full sequence is Voltage-gated potassium channel regulatory subunit KCNG4 (506 aa).

At 1–216 (MPMSSRDRDL…EMVEDPQSGL (216 aa)) the chain is on the cytoplasmic side. The chain crosses the membrane as a helical span at residues 217 to 238 (PGKVFACLSVLFVATTAVSLCV). The Extracellular segment spans residues 239–259 (STMPDFRAEEGKGECTRKCYY). A helical transmembrane segment spans residues 260–281 (IFVVESICVAWFSLEFCLRFVQ). Topologically, residues 282-292 (APNKCQFFRGP) are cytoplasmic. Residues 293–312 (LNVIDILAISPYYVSLAVSD) traverse the membrane as a helical segment. Over 313 to 326 (ESPEAGERPSSSSY) the chain is Extracellular. A helical; Voltage-sensor membrane pass occupies residues 327–351 (LEKVGLVLRVLRALRILYVMRLARH). The Cytoplasmic segment spans residues 352 to 366 (SLGLQTLGLTVRRCA). The chain crosses the membrane as a helical span at residues 367–388 (REFGLLMLFLAVAVTLFSPLVY). Residues 389 to 403 (VAENESGRVLEFTSI) are Extracellular-facing. An intramembrane region (helical) is located at residues 404–415 (PASYWWAIISMT). A Selectivity filter motif is present at residues 416 to 421 (TVGYGD). The stretch at 416–423 (TVGYGDMV) is an intramembrane region. At 424-430 (PRSVPGQ) the chain is on the extracellular side. The helical transmembrane segment at 431–459 (MVALSSILSGILIMAFPATSIFHTFSHSY) threads the bilayer. Topologically, residues 460–506 (LELKREQEQVQARLRRLQNTNSASERELLSDVDDLVPEGLTSPGRYM) are cytoplasmic.

It belongs to the potassium channel family. G (TC 1.A.1.2) subfamily. Kv6.4/KCNG4 sub-subfamily. As to quaternary structure, heterotetramer with KCNB1. Does not form homomultimer.

The protein resides in the cell membrane. In terms of biological role, regulatory subunit of the voltage-gated potassium (Kv) channel which, when coassembled with KCNB1, modulates the kinetics parameters of the heterotetrameric channel namely the time course of activation, deactivation and inactivation and on the voltage-dependence of activation. Potassium channel subunit that does not form functional channels by itself. Reduces the deactivation rate. Modulates the threshold for activation by shifting by approximately 20 mV in hyperpolarizing direction. Markedly changes the inactivation by shifting the voltage dependence of inactivation by approximately 40 mV in hyperpolarizing direction. Acceleratee activation and enhances the time course of activation. This chain is Voltage-gated potassium channel regulatory subunit KCNG4, found in Mus musculus (Mouse).